The sequence spans 130 residues: Small ribosomal subunit protein uS9 (130 aa).

It belongs to the universal ribosomal protein uS9 family.

The sequence is that of Small ribosomal subunit protein uS9 from Shewanella piezotolerans (strain WP3 / JCM 13877).